The sequence spans 537 residues: Chaperonin GroEL (537 aa).

Residues 29–32 (TLGP), 86–90 (DGTTT), glycine 413, 477–479 (NAA), and aspartate 493 contribute to the ATP site.

The protein belongs to the chaperonin (HSP60) family. As to quaternary structure, forms a cylinder of 14 subunits composed of two heptameric rings stacked back-to-back. Interacts with the co-chaperonin GroES.

It is found in the cytoplasm. It carries out the reaction ATP + H2O + a folded polypeptide = ADP + phosphate + an unfolded polypeptide.. Its function is as follows. Together with its co-chaperonin GroES, plays an essential role in assisting protein folding. The GroEL-GroES system forms a nano-cage that allows encapsulation of the non-native substrate proteins and provides a physical environment optimized to promote and accelerate protein folding. This Parascardovia denticolens (Bifidobacterium denticolens) protein is Chaperonin GroEL.